The chain runs to 419 residues: Histidine--tRNA ligase (419 aa).

Belongs to the class-II aminoacyl-tRNA synthetase family. As to quaternary structure, homodimer.

It is found in the cytoplasm. It carries out the reaction tRNA(His) + L-histidine + ATP = L-histidyl-tRNA(His) + AMP + diphosphate + H(+). In Trichlorobacter lovleyi (strain ATCC BAA-1151 / DSM 17278 / SZ) (Geobacter lovleyi), this protein is Histidine--tRNA ligase.